The following is a 398-amino-acid chain: Argininosuccinate synthase (398 aa).

8–16 (AYSGGLDTT) contacts ATP. An L-citrulline-binding site is contributed by Tyr87. ATP is bound at residue Gly117. 3 residues coordinate L-aspartate: Thr119, Asn123, and Asp124. Asn123 provides a ligand contact to L-citrulline. L-citrulline is bound by residues Arg127, Ser175, Glu259, and Tyr271.

Belongs to the argininosuccinate synthase family. Type 1 subfamily. Homotetramer.

The protein resides in the cytoplasm. It catalyses the reaction L-citrulline + L-aspartate + ATP = 2-(N(omega)-L-arginino)succinate + AMP + diphosphate + H(+). It functions in the pathway amino-acid biosynthesis; L-arginine biosynthesis; L-arginine from L-ornithine and carbamoyl phosphate: step 2/3. This chain is Argininosuccinate synthase, found in Corynebacterium jeikeium (strain K411).